We begin with the raw amino-acid sequence, 163 residues long: Cytochrome b6-f complex subunit 4 (163 aa).

The next 3 helical transmembrane spans lie at 36 to 56 (LLYI…GLAV), 95 to 115 (LLGV…PFLE), and 131 to 151 (TVFL…TLPI).

The protein belongs to the cytochrome b family. PetD subfamily. As to quaternary structure, the 4 large subunits of the cytochrome b6-f complex are cytochrome b6, subunit IV (17 kDa polypeptide, petD), cytochrome f and the Rieske protein, while the 4 small subunits are petG, petL, petM and petN. The complex functions as a dimer.

Its subcellular location is the plastid. The protein localises to the chloroplast thylakoid membrane. Functionally, component of the cytochrome b6-f complex, which mediates electron transfer between photosystem II (PSII) and photosystem I (PSI), cyclic electron flow around PSI, and state transitions. The chain is Cytochrome b6-f complex subunit 4 from Pelargonium hortorum (Common geranium).